Reading from the N-terminus, the 234-residue chain is Filarial antigen Av33 (234 aa).

The signal sequence occupies residues 1-17 (MKILSCLLLCTITVLEG). An intrachain disulfide couples Cys-135 to Cys-230. The segment at 204–234 (TSQASEATTIPTTTQTPVEAPETPSFCVPIY) is disordered. Residues 211–220 (TTIPTTTQTP) are compositionally biased toward low complexity.

This sequence belongs to the protease inhibitor I33 family.

The protein resides in the secreted. Functionally, aspartyl protease inhibitor. This chain is Filarial antigen Av33, found in Acanthocheilonema viteae (Filarial nematode worm).